A 500-amino-acid polypeptide reads, in one-letter code: Galactofuranose transporter ATP-binding protein YtfR (500 aa).

ABC transporter domains lie at 10–245 (LRTE…LGRE) and 259–497 (LSDK…IMNA). An ATP-binding site is contributed by 42-49 (GENGAGKS).

This sequence belongs to the ABC transporter superfamily. The complex is composed of two ATP-binding proteins (YtfR), two transmembrane proteins (YtfT and YjfF) and a solute-binding protein (YtfQ).

The protein resides in the cell inner membrane. It carries out the reaction D-galactofuranose(out) + ATP + H2O = D-galactofuranose(in) + ADP + phosphate + H(+). Functionally, part of the ABC transporter complex YtfQRT-YjfF involved in galactofuranose transport. Responsible for energy coupling to the transport system. This Escherichia coli (strain K12) protein is Galactofuranose transporter ATP-binding protein YtfR (ytfR).